The sequence spans 202 residues: Histone H1 (202 aa).

Disordered stretches follow at residues 1-50 and 114-202; these read MTAI…VTHP and YKLS…KIAV. Over residues 18 to 38 the composition is skewed to basic and acidic residues; the sequence is EASKVKEQAPATDKKPRAPKE. An H15 domain is found at 48 to 118; it reads THPPYFQMIK…KIKASYKLSE (71 aa). Basic residues predominate over residues 160–202; that stretch reads KAKATPKPKKVGAKRTRKSTPAKAKQPKSIKSPAAKRAKKIAV.

The protein belongs to the histone H1/H5 family.

The protein localises to the nucleus. It localises to the chromosome. Functionally, histones H1 are necessary for the condensation of nucleosome chains into higher-order structures. The chain is Histone H1 from Solanum pennellii (Tomato).